Consider the following 612-residue polypeptide: Elongation factor 4 (612 aa).

One can recognise a tr-type G domain in the interval 11-193 (NHIRNFSIVA…KIVTDIPAPS (183 aa)). GTP contacts are provided by residues 23 to 28 (DHGKST) and 140 to 143 (NKID).

The protein belongs to the TRAFAC class translation factor GTPase superfamily. Classic translation factor GTPase family. LepA subfamily.

Its subcellular location is the cell membrane. It carries out the reaction GTP + H2O = GDP + phosphate + H(+). Its function is as follows. Required for accurate and efficient protein synthesis under certain stress conditions. May act as a fidelity factor of the translation reaction, by catalyzing a one-codon backward translocation of tRNAs on improperly translocated ribosomes. Back-translocation proceeds from a post-translocation (POST) complex to a pre-translocation (PRE) complex, thus giving elongation factor G a second chance to translocate the tRNAs correctly. Binds to ribosomes in a GTP-dependent manner. The protein is Elongation factor 4 of Lactobacillus acidophilus (strain ATCC 700396 / NCK56 / N2 / NCFM).